The following is a 115-amino-acid chain: Con-Ins G1a (115 aa).

An N-terminal signal peptide occupies residues Met1–Gly24. The propeptide occupies Asn25–Arg29. Pro34 carries the post-translational modification 4-hydroxyproline; partial. 3 disulfides stabilise this stretch: Cys38–Cys101, Cys50–Cys114, and Cys100–Cys105. The residue at position 41 (Glu41) is a 4-carboxyglutamate. Residues Lys53–Arg94 constitute a propeptide, c peptide. Glu98 bears the 4-carboxyglutamate mark. A 4-hydroxyproline; partial modification is found at Pro104. Glu109 is modified (4-carboxyglutamate; partial). Position 114 is a cysteine amide (Cys114).

The protein belongs to the insulin family. Heterodimer of A and B chains; disulfide-linked. Expressed by the venom gland.

The protein resides in the secreted. Functionally, this venom insulin, from a fish-hunting cone snail, facilitates prey capture by rapidly inducing hypoglycemic shock. It is one of the smallest known insulin found in nature and lacks the C-terminal segment of the B chain that, in human insulin, mediates engagement of the insulin receptor (INSR) and assembly of the hormone's hexameric storage form. Despite lacking this segment, it both binds and activates human insulin receptor (long isoform (HIR-B)) with a high potency (EC(50)=16.28 nM). In vivo, intraperitoneal injection of this peptide into zebrafish lowers blood glucose with the same potency than human insulin. In addition, when applied to water, this peptide reduces overall locomotor activity of zebrafish larvae, observed as a significant decrease in the percentage of time spent swimming and movement frequency. When tested on a mouse model of diabetes, this insulin also lowers blood glucose with a 10-fold lower potency than human insulin. In Conus geographus (Geography cone), this protein is Con-Ins G1a.